The following is a 152-amino-acid chain: MVKAVCVINGDAKGTVFFEQETSEAPVKVTGEVLGLAKGLHGFHVHEFGDNTNGCMSSGPHFNPRNKEHGAPTDENRHLGDLGNIQAAGDSPTAVSITDSKITLFGADSIIGRTVVVHADADDLGKGGHELSKTTGNAGARIGCGVIGIAKI.

Residues His-44, His-46, and His-61 each coordinate Cu cation. The Zn(2+) site is built by His-61, His-69, His-78, and Asp-81. His-118 lines the Cu cation pocket.

It belongs to the Cu-Zn superoxide dismutase family. Homodimer. The cofactor is Cu cation. Requires Zn(2+) as cofactor.

Its subcellular location is the cytoplasm. It carries out the reaction 2 superoxide + 2 H(+) = H2O2 + O2. In terms of biological role, destroys radicals which are normally produced within the cells and which are toxic to biological systems. This Drosophila pseudoobscura pseudoobscura (Fruit fly) protein is Superoxide dismutase [Cu-Zn].